A 349-amino-acid polypeptide reads, in one-letter code: N-acetyltaurine hydrolase (349 aa).

A divalent metal cation-binding residues include histidine 26, histidine 28, glutamate 169, histidine 201, histidine 230, and aspartate 298.

Belongs to the metallo-dependent hydrolases superfamily. Phosphotriesterase family. A divalent metal cation is required as a cofactor. In terms of tissue distribution, expressed primarily in proximal tubules of the kidney.

Its subcellular location is the cytoplasm. The protein localises to the cytosol. It carries out the reaction N-acetyltaurine + H2O = taurine + acetate. The catalysed reaction is N-propanoyltaurine + H2O = propanoate + taurine. It catalyses the reaction N-acetyl-L-methionine + H2O = L-methionine + acetate. The enzyme catalyses N-acetyl-L-isoleucine + H2O = L-isoleucine + acetate. It carries out the reaction N-acetyl-L-leucine + H2O = L-leucine + acetate. The catalysed reaction is N-acetyl-L-valine + H2O = L-valine + acetate. N-acetyltaurine hydrolase that regulates feeding by catalyzing the hydrolysis of N-acetyltaurine into taurine and acetate. N-acetyltaurine has anorexigenic and anti-obesity effects that are dependent on GFRAL receptor and GDF15. PTER also acts on other N-acetyl amino acids (Met, Ile, Leu, Val) and N-propionyltaurine, but at lower rates. Binds resiniferotoxin, a vanilloid that desensitizes nociceptive neurons. The sequence is that of N-acetyltaurine hydrolase from Rattus norvegicus (Rat).